A 487-amino-acid polypeptide reads, in one-letter code: MQKIWLFSIITIFLITELQCYPNSAEERLLSYIFDGYNSLIRPVLNASSPPIEVFFSLAFVLLINVDEKNQIMQTNVWPTMKWNDYQMQWDPREFDGIKTIRVPPDKVWLPDIVLFNNADGNYLVSFYSNVVVEHTGDMLWVPPAVYKSSCLIDVEFFPFDEQVCSLTFGSWTFRKDELQLSYLSGKRHVELNDYLPSGVWDLIDAPGLLIDERSKISYQIKIRRKALFYTVILIMPTVLMAFLSMMVFYLPAESSEKITLAISILLALVVFLLVVSKILPPTSSTIPLMAKYLLMTFIMNMITIMVSVIIINVYFRGPATHIMPNWVKTVFLKFLPVLFVMRRPESTEKELAKMKREKRERRSMKSALKTFFKRNDAKISEQPKQTSRKDGSSSEEKLSSDAKKAIEAIEYITTHLTHDNAFKRQREEWKFVSVVIDRLLLYLFFAVTTGGTVGILLSAPNVFEQVNQTSVIERLKQQAAEEMLNS.

A signal peptide spans 1–20 (MQKIWLFSIITIFLITELQC). Topologically, residues 21–231 (YPNSAEERLL…KIRRKALFYT (211 aa)) are extracellular. N-linked (GlcNAc...) asparagine glycosylation is present at Asn46. Cys151 and Cys165 form a disulfide bridge. 3 helical membrane-spanning segments follow: residues 232–252 (VILIMPTVLMAFLSMMVFYLP), 259–279 (ITLAISILLALVVFLLVVSKI), and 294–314 (LLMTFIMNMITIMVSVIIINV). Residues 315–439 (YFRGPATHIM…WKFVSVVIDR (125 aa)) are Cytoplasmic-facing. The interval 380 to 400 (ISEQPKQTSRKDGSSSEEKLS) is disordered. The chain crosses the membrane as a helical span at residues 440-460 (LLLYLFFAVTTGGTVGILLSA).

The protein belongs to the ligand-gated ion channel (TC 1.A.9) family. Acetylcholine receptor (TC 1.A.9.1) subfamily. As to quaternary structure, component of nicotinic acetylcholine receptor. In cholinergic motoneurons, composed of 2 non-alpha subunits acr-2 and acr-3, and 3 alpha subunits unc-38, unc-63 and acr-12.

It localises to the postsynaptic cell membrane. It is found in the cell membrane. Its function is as follows. Non-alpha subunit of nicotinic acetylcholine receptor (nAChR). Probably acts in cholinergic motoneurons to regulate presynaptic neurotransmitter release, thereby ensuring normal level of excitation of cholinergic motoneurons during locomotion. The polypeptide is Acetylcholine receptor subunit beta-type acr-3 (acr-3) (Caenorhabditis elegans).